Here is a 686-residue protein sequence, read N- to C-terminus: Putative pentatricopeptide repeat-containing protein At3g49142 (686 aa).

12 PPR repeats span residues 73–103, 104–138, 139–173, 174–204, 205–239, 240–272, 273–307, 308–342, 343–373, 374–408, 409–439, and 445–475; these read NSSL…IPER, NVII…NVRP, DHYT…GLSS, TLFV…MSRR, DVVS…KISH, DAGT…MGKK, SLVS…GFEP, DAVS…KLIP, NLLL…MKSR, DVVS…GLVP, DSIA…MTDH, and RLEH…MSME. The type E motif stretch occupies residues 480–555; the sequence is VWGALLGACR…NPGASNVEVN (76 aa). Residues 556–586 form a type E(+) motif region; it reads RIIHTFLVGDRSHPQSDEIYRELDVLVKKMK. The tract at residues 587–686 is type DYW motif; that stretch reads ELGYVPDSES…FGVCSCGDYW (100 aa).

The protein belongs to the PPR family. PCMP-H subfamily.

In Arabidopsis thaliana (Mouse-ear cress), this protein is Putative pentatricopeptide repeat-containing protein At3g49142 (PCMP-H77).